Reading from the N-terminus, the 175-residue chain is 3-hydroxydecanoyl-[acyl-carrier-protein] dehydratase (175 aa).

His71 is an active-site residue.

Belongs to the thioester dehydratase family. FabA subfamily. Homodimer.

The protein localises to the cytoplasm. The catalysed reaction is a (3R)-hydroxyacyl-[ACP] = a (2E)-enoyl-[ACP] + H2O. The enzyme catalyses (3R)-hydroxydecanoyl-[ACP] = (2E)-decenoyl-[ACP] + H2O. It carries out the reaction (2E)-decenoyl-[ACP] = (3Z)-decenoyl-[ACP]. Its pathway is lipid metabolism; fatty acid biosynthesis. Its function is as follows. Necessary for the introduction of cis unsaturation into fatty acids. Catalyzes the dehydration of (3R)-3-hydroxydecanoyl-ACP to E-(2)-decenoyl-ACP and then its isomerization to Z-(3)-decenoyl-ACP. Can catalyze the dehydratase reaction for beta-hydroxyacyl-ACPs with saturated chain lengths up to 16:0, being most active on intermediate chain length. In Rhodopseudomonas palustris (strain BisB5), this protein is 3-hydroxydecanoyl-[acyl-carrier-protein] dehydratase.